A 159-amino-acid chain; its full sequence is Phosphopantetheine adenylyltransferase (159 aa).

Thr10 provides a ligand contact to substrate. ATP is bound by residues 10–11 and His18; that span reads TF. Lys42, Leu74, and Arg88 together coordinate substrate. ATP contacts are provided by residues 89–91, Glu99, and 124–130; these read GLR and NSFISST.

This sequence belongs to the bacterial CoaD family. In terms of assembly, homohexamer. Requires Mg(2+) as cofactor.

The protein localises to the cytoplasm. The enzyme catalyses (R)-4'-phosphopantetheine + ATP + H(+) = 3'-dephospho-CoA + diphosphate. It functions in the pathway cofactor biosynthesis; coenzyme A biosynthesis; CoA from (R)-pantothenate: step 4/5. Its function is as follows. Reversibly transfers an adenylyl group from ATP to 4'-phosphopantetheine, yielding dephospho-CoA (dPCoA) and pyrophosphate. This is Phosphopantetheine adenylyltransferase from Shewanella pealeana (strain ATCC 700345 / ANG-SQ1).